The following is a 244-amino-acid chain: Phosphoadenosine 5'-phosphosulfate reductase (244 aa).

C239 functions as the Nucleophile; cysteine thiosulfonate intermediate in the catalytic mechanism.

Belongs to the PAPS reductase family. CysH subfamily.

It is found in the cytoplasm. The enzyme catalyses [thioredoxin]-disulfide + sulfite + adenosine 3',5'-bisphosphate + 2 H(+) = [thioredoxin]-dithiol + 3'-phosphoadenylyl sulfate. Its pathway is sulfur metabolism; hydrogen sulfide biosynthesis; sulfite from sulfate: step 3/3. Its function is as follows. Catalyzes the formation of sulfite from phosphoadenosine 5'-phosphosulfate (PAPS) using thioredoxin as an electron donor. The polypeptide is Phosphoadenosine 5'-phosphosulfate reductase (Zymomonas mobilis subsp. mobilis (strain ATCC 31821 / ZM4 / CP4)).